The sequence spans 232 residues: Small ribosomal subunit protein uS3 (232 aa).

A KH type-2 domain is found at 39 to 107 (VRQYLTKALK…PAQINIAEVR (69 aa)).

It belongs to the universal ribosomal protein uS3 family. As to quaternary structure, part of the 30S ribosomal subunit. Forms a tight complex with proteins S10 and S14.

Functionally, binds the lower part of the 30S subunit head. Binds mRNA in the 70S ribosome, positioning it for translation. In Pseudoalteromonas atlantica (strain T6c / ATCC BAA-1087), this protein is Small ribosomal subunit protein uS3.